Here is a 490-residue protein sequence, read N- to C-terminus: Betaine aldehyde dehydrogenase (490 aa).

K(+)-binding residues include Ile-27 and Asp-93. Residue 150 to 152 (GAW) participates in NAD(+) binding. The Charge relay system role is filled by Lys-162. An NAD(+)-binding site is contributed by 176 to 179 (KPSE). A K(+)-binding site is contributed by Val-180. An NAD(+)-binding site is contributed by 230-233 (GTDT). Leu-246 provides a ligand contact to K(+). The Proton acceptor role is filled by Glu-252. Residues Gly-254, Cys-286, and Glu-387 each contribute to the NAD(+) site. Cys-286 serves as the catalytic Nucleophile. Cys-286 bears the Cysteine sulfenic acid (-SOH) mark. K(+)-binding residues include Lys-457 and Gly-460. Glu-464 acts as the Charge relay system in catalysis.

It belongs to the aldehyde dehydrogenase family. As to quaternary structure, dimer of dimers. The cofactor is K(+).

The catalysed reaction is betaine aldehyde + NAD(+) + H2O = glycine betaine + NADH + 2 H(+). Its pathway is amine and polyamine biosynthesis; betaine biosynthesis via choline pathway; betaine from betaine aldehyde: step 1/1. In terms of biological role, involved in the biosynthesis of the osmoprotectant glycine betaine. Catalyzes the irreversible oxidation of betaine aldehyde to the corresponding acid. This Pseudomonas savastanoi pv. phaseolicola (strain 1448A / Race 6) (Pseudomonas syringae pv. phaseolicola (strain 1448A / Race 6)) protein is Betaine aldehyde dehydrogenase.